Consider the following 358-residue polypeptide: Na(+)/H(+) exchange regulatory cofactor NHE-RF1 (358 aa).

Ser2 is modified (N-acetylserine). Residues Ser2 and Ser46 each carry the phosphoserine modification. One can recognise a PDZ 1 domain in the interval 14-94 (LCCLEKGPNG…AVRLLVVDPE (81 aa)). A compositionally biased stretch (low complexity) spans 114 to 132 (QEAPGQAEPPAAAEVQGAG). The segment at 114-192 (QEAPGQAEPP…DPDSPAEASG (79 aa)) is disordered. Residues 135–152 (NEPREADKSHPEQRELRP) are compositionally biased toward basic and acidic residues. The region spanning 154–234 (LCTMKKGPSG…ETKLLVVDRE (81 aa)) is the PDZ 2 domain. Phosphoserine is present on residues Ser162, Ser269, Ser280, Ser290, and Ser291. The interval 277–358 (ALESPRPALV…SKKNELFSNL (82 aa)) is disordered. Polar residues predominate over residues 288–306 (SASSDTSEELNSQDSPPKQ). A Phosphothreonine modification is found at Thr293. 3 positions are modified to phosphoserine: Ser294, Ser299, and Ser302. The segment covering 307 to 319 (DSTAPSSTSSSDP) has biased composition (low complexity). Over residues 348 to 358 (WSKKNELFSNL) the composition is skewed to basic and acidic residues.

In terms of assembly, homodimer, and heterodimer with NHERF2. Binds the N-termini of EZR, RDX and MSN. Binds the C-termini of PDGFRA, PDGFRB, ADRB2, NOS2 and CFTR. Binds ARHGAP17, EPI64, RACK1, OPRK1, GNAQ, CTNNB1 and PLCB3. Binds PDZK1. Interacts with CLCN3. Binds the C-terminus of PAG1. In resting T-cells, part of a PAG1-NHERF1-MSN complex which is disrupted upon TCR activation. Forms a complex with CFTR and SLC4A7. Forms a complex with SLC4A7 and ATP6V1B1. Interacts with TRPC4 (via the PDZ-binding domain). Directly interacts with HTR4. Interacts (via the PDZ 1 domain) with PODXL (via the C-terminal PDZ-binding motif DTHL); interaction is not detected in glomerular epithelium cells. Interacts (via the PDZ 1 domain) with PODXL (via the C-terminal PDZ-binding motif DTHL); the interaction take place early in the secretory pathway and is necessary for its apical membrane sorting. Interacts with SLC26A3. Interacts with MCC. Interacts with SLC34A1. Interacts (via the PDZ domains) with SLC26A6 isoform 4 and isoform 5. Interacts (via PDZ domains) with ACE2 (via PDZ-binding motif); the interaction may enhance ACE2 membrane residence. Phosphorylated on serine residues. Detected in liver, kidney, pancreas, prostate, spleen, small intestine and placenta, in particular in the syncytiotrophoblast.

It localises to the cytoplasm. It is found in the apical cell membrane. The protein localises to the endomembrane system. Its subcellular location is the cell projection. The protein resides in the filopodium. It localises to the ruffle. It is found in the microvillus. Scaffold protein that connects plasma membrane proteins with members of the ezrin/moesin/radixin family and thereby helps to link them to the actin cytoskeleton and to regulate their surface expression. Necessary for recycling of internalized ADRB2. Was first known to play a role in the regulation of the activity and subcellular location of SLC9A3. Necessary for cAMP-mediated phosphorylation and inhibition of SLC9A3. May enhance Wnt signaling. May participate in HTR4 targeting to microvilli. Involved in the regulation of phosphate reabsorption in the renal proximal tubules. Involved in sperm capacitation. May participate in the regulation of the chloride and bicarbonate homeostasis in spermatozoa. In Homo sapiens (Human), this protein is Na(+)/H(+) exchange regulatory cofactor NHE-RF1.